The sequence spans 494 residues: Probable cytosol aminopeptidase (494 aa).

Mn(2+) is bound by residues Lys260 and Asp265. Lys272 is an active-site residue. Residues Asp283, Asp342, and Glu344 each coordinate Mn(2+). Residue Arg346 is part of the active site.

Belongs to the peptidase M17 family. Mn(2+) serves as cofactor.

The protein resides in the cytoplasm. The enzyme catalyses Release of an N-terminal amino acid, Xaa-|-Yaa-, in which Xaa is preferably Leu, but may be other amino acids including Pro although not Arg or Lys, and Yaa may be Pro. Amino acid amides and methyl esters are also readily hydrolyzed, but rates on arylamides are exceedingly low.. It carries out the reaction Release of an N-terminal amino acid, preferentially leucine, but not glutamic or aspartic acids.. Its function is as follows. Presumably involved in the processing and regular turnover of intracellular proteins. Catalyzes the removal of unsubstituted N-terminal amino acids from various peptides. The polypeptide is Probable cytosol aminopeptidase (Bacillus cereus (strain Q1)).